We begin with the raw amino-acid sequence, 681 residues long: RNA polymerase sigma factor RpoD (681 aa).

Disordered regions lie at residues M1–K60 and D239–K270. The segment covering E261–K270 has biased composition (basic and acidic residues). The tract at residues M446–T516 is sigma-70 factor domain-2. Residues D470–Q473 carry the Interaction with polymerase core subunit RpoC motif. The tract at residues D525–H601 is sigma-70 factor domain-3. The interval V614–S668 is sigma-70 factor domain-4. The segment at residues L641–S660 is a DNA-binding region (H-T-H motif).

The protein belongs to the sigma-70 factor family. RpoD/SigA subfamily. In terms of assembly, interacts transiently with the RNA polymerase catalytic core.

The protein resides in the cytoplasm. Functionally, sigma factors are initiation factors that promote the attachment of RNA polymerase to specific initiation sites and are then released. This sigma factor is the primary sigma factor during exponential growth. The sequence is that of RNA polymerase sigma factor RpoD from Helicobacter pylori (strain J99 / ATCC 700824) (Campylobacter pylori J99).